A 1380-amino-acid chain; its full sequence is DNA-directed RNA polymerase subunit beta (1380 aa).

It belongs to the RNA polymerase beta chain family. The RNAP catalytic core consists of 2 alpha, 1 beta, 1 beta' and 1 omega subunit. When a sigma factor is associated with the core the holoenzyme is formed, which can initiate transcription.

The catalysed reaction is RNA(n) + a ribonucleoside 5'-triphosphate = RNA(n+1) + diphosphate. In terms of biological role, DNA-dependent RNA polymerase catalyzes the transcription of DNA into RNA using the four ribonucleoside triphosphates as substrates. The polypeptide is DNA-directed RNA polymerase subunit beta (Nitrobacter winogradskyi (strain ATCC 25391 / DSM 10237 / CIP 104748 / NCIMB 11846 / Nb-255)).